Here is a 73-residue protein sequence, read N- to C-terminus: Large ribosomal subunit protein bL31 (73 aa).

4 residues coordinate Zn(2+): Cys-16, Cys-18, Cys-36, and Cys-39.

The protein belongs to the bacterial ribosomal protein bL31 family. Type A subfamily. Part of the 50S ribosomal subunit. The cofactor is Zn(2+).

Binds the 23S rRNA. The chain is Large ribosomal subunit protein bL31 from Citrifermentans bemidjiense (strain ATCC BAA-1014 / DSM 16622 / JCM 12645 / Bem) (Geobacter bemidjiensis).